Consider the following 209-residue polypeptide: Imidazole glycerol phosphate synthase subunit HisH (209 aa).

A Glutamine amidotransferase type-1 domain is found at 4–209 (PVVVFEYGSG…RLLANWIGSL (206 aa)). The active-site Nucleophile is the Cys-82. Active-site residues include His-190 and Glu-192.

In terms of assembly, heterodimer of HisH and HisF.

The protein localises to the cytoplasm. It catalyses the reaction 5-[(5-phospho-1-deoxy-D-ribulos-1-ylimino)methylamino]-1-(5-phospho-beta-D-ribosyl)imidazole-4-carboxamide + L-glutamine = D-erythro-1-(imidazol-4-yl)glycerol 3-phosphate + 5-amino-1-(5-phospho-beta-D-ribosyl)imidazole-4-carboxamide + L-glutamate + H(+). The enzyme catalyses L-glutamine + H2O = L-glutamate + NH4(+). It functions in the pathway amino-acid biosynthesis; L-histidine biosynthesis; L-histidine from 5-phospho-alpha-D-ribose 1-diphosphate: step 5/9. Its function is as follows. IGPS catalyzes the conversion of PRFAR and glutamine to IGP, AICAR and glutamate. The HisH subunit catalyzes the hydrolysis of glutamine to glutamate and ammonia as part of the synthesis of IGP and AICAR. The resulting ammonia molecule is channeled to the active site of HisF. The protein is Imidazole glycerol phosphate synthase subunit HisH of Leifsonia xyli subsp. xyli (strain CTCB07).